A 149-amino-acid polypeptide reads, in one-letter code: Transcription antitermination protein NusB (149 aa).

It belongs to the NusB family.

In terms of biological role, involved in transcription antitermination. Required for transcription of ribosomal RNA (rRNA) genes. Binds specifically to the boxA antiterminator sequence of the ribosomal RNA (rrn) operons. In Caulobacter vibrioides (strain ATCC 19089 / CIP 103742 / CB 15) (Caulobacter crescentus), this protein is Transcription antitermination protein NusB.